Here is a 688-residue protein sequence, read N- to C-terminus: Probable glucan endo-1,3-beta-glucosidase btgC (688 aa).

Disordered stretches follow at residues 1 to 91 (MSGP…NLGP), 126 to 148 (ANIP…PEPP), and 168 to 195 (GQLT…IPYQ). Residues 1 to 307 (MSGPNRTYSF…PKPGGGNKKR (307 aa)) are Cytoplasmic-facing. The span at 175-188 (SVSHLSSTNPSQRN) shows a compositional bias: polar residues. Residues 308–328 (GWIVGAILAFIIIGAIVGGAV) traverse the membrane as a helical; Signal-anchor for type II membrane protein segment. The Extracellular portion of the chain corresponds to 329–688 (GGTIGHRGNE…IPDCGGKTAT (360 aa)). Residues 334-363 (HRGNEEPSSASSASSSSTQTATEDTSVNGD) form a disordered region. The segment covering 341-355 (SSASSASSSSTQTAT) has biased composition (low complexity). Residues Asn408, Asn431, and Asn459 are each glycosylated (N-linked (GlcNAc...) asparagine). Glu491 serves as the catalytic Proton donor. Glu590 serves as the catalytic Nucleophile. 2 N-linked (GlcNAc...) asparagine glycosylation sites follow: Asn609 and Asn635.

It belongs to the glycosyl hydrolase 17 family.

The protein resides in the cell membrane. It carries out the reaction Hydrolysis of (1-&gt;3)-beta-D-glucosidic linkages in (1-&gt;3)-beta-D-glucans.. Glucanases play a role in cell expansion during growth, in cell-cell fusion during mating, and in spore release during sporulation. This enzyme may be involved in beta-glucan degradation. Active on laminarin and lichenan. The polypeptide is Probable glucan endo-1,3-beta-glucosidase btgC (btgC) (Aspergillus fumigatus (strain ATCC MYA-4609 / CBS 101355 / FGSC A1100 / Af293) (Neosartorya fumigata)).